The following is a 380-amino-acid chain: Cytochrome b (380 aa).

The next 4 membrane-spanning stretches (helical) occupy residues 34–54 (FGSLLGICLTMQILTGLLLAT), 78–99 (WLIRNLHANGASFFFICIYLHI), 114–134 (WNTGVILLLTLMATAFVGYVL), and 179–199 (FFALHFLLPFAIAGLTLIHLT). Residues H84 and H98 each coordinate heme b. H183 and H197 together coordinate heme b. H202 serves as a coordination point for a ubiquinone. Helical transmembrane passes span 227-247 (LKDILGLTLLLLPLTTLALFS), 289-309 (LGGVLALAASVLILFLCPLLH), 321-341 (LSQLLFWTLTANLLILTWVGS), and 348-368 (FIIIGQLASLTYFFTLLILFP).

This sequence belongs to the cytochrome b family. As to quaternary structure, the cytochrome bc1 complex contains 11 subunits: 3 respiratory subunits (MT-CYB, CYC1 and UQCRFS1), 2 core proteins (UQCRC1 and UQCRC2) and 6 low-molecular weight proteins (UQCRH/QCR6, UQCRB/QCR7, UQCRQ/QCR8, UQCR10/QCR9, UQCR11/QCR10 and a cleavage product of UQCRFS1). This cytochrome bc1 complex then forms a dimer. Requires heme b as cofactor.

The protein localises to the mitochondrion inner membrane. Its function is as follows. Component of the ubiquinol-cytochrome c reductase complex (complex III or cytochrome b-c1 complex) that is part of the mitochondrial respiratory chain. The b-c1 complex mediates electron transfer from ubiquinol to cytochrome c. Contributes to the generation of a proton gradient across the mitochondrial membrane that is then used for ATP synthesis. The sequence is that of Cytochrome b (MT-CYB) from Ciconia ciconia (White stork).